A 79-amino-acid chain; its full sequence is Small ribosomal subunit protein uS17 (79 aa).

Belongs to the universal ribosomal protein uS17 family. Part of the 30S ribosomal subunit.

One of the primary rRNA binding proteins, it binds specifically to the 5'-end of 16S ribosomal RNA. The chain is Small ribosomal subunit protein uS17 from Caulobacter sp. (strain K31).